The chain runs to 497 residues: Acetyl-coenzyme A carboxylase carboxyl transferase subunit beta, chloroplastic (497 aa).

A disordered region spans residues 30 to 50; sequence GPVENTTVNEDPTRNDTDKNI. Basic and acidic residues predominate over residues 40-50; sequence DPTRNDTDKNI. The CoA carboxyltransferase N-terminal domain maps to 230–497; that stretch reads VQCECENCYG…FFPLNQNSIK (268 aa). Residues cysteine 232, cysteine 237, cysteine 253, and cysteine 256 each coordinate Zn(2+). Residues 232-256 form a C4-type zinc finger; it reads CECENCYGVNYKKSLNSKMNICEQC.

Belongs to the AccD/PCCB family. In terms of assembly, acetyl-CoA carboxylase is a heterohexamer composed of biotin carboxyl carrier protein, biotin carboxylase and 2 subunits each of ACCase subunit alpha and ACCase plastid-coded subunit beta (accD). Requires Zn(2+) as cofactor.

Its subcellular location is the plastid. It localises to the chloroplast stroma. It catalyses the reaction N(6)-carboxybiotinyl-L-lysyl-[protein] + acetyl-CoA = N(6)-biotinyl-L-lysyl-[protein] + malonyl-CoA. The protein operates within lipid metabolism; malonyl-CoA biosynthesis; malonyl-CoA from acetyl-CoA: step 1/1. Functionally, component of the acetyl coenzyme A carboxylase (ACC) complex. Biotin carboxylase (BC) catalyzes the carboxylation of biotin on its carrier protein (BCCP) and then the CO(2) group is transferred by the transcarboxylase to acetyl-CoA to form malonyl-CoA. This Gossypium hirsutum (Upland cotton) protein is Acetyl-coenzyme A carboxylase carboxyl transferase subunit beta, chloroplastic.